The chain runs to 79 residues: Acyl carrier protein (79 aa).

The 76-residue stretch at 2-77 folds into the Carrier domain; sequence ADHASKIKDI…DAVAYLEAKV (76 aa). Serine 37 bears the O-(pantetheine 4'-phosphoryl)serine mark.

It belongs to the acyl carrier protein (ACP) family. In terms of processing, 4'-phosphopantetheine is transferred from CoA to a specific serine of apo-ACP by AcpS. This modification is essential for activity because fatty acids are bound in thioester linkage to the sulfhydryl of the prosthetic group.

It localises to the cytoplasm. The protein operates within lipid metabolism; fatty acid biosynthesis. Functionally, carrier of the growing fatty acid chain in fatty acid biosynthesis. The protein is Acyl carrier protein of Gemmatimonas aurantiaca (strain DSM 14586 / JCM 11422 / NBRC 100505 / T-27).